The following is a 444-amino-acid chain: Signal recognition particle 54 kDa protein (444 aa).

Residues 102–109, 184–188, and 244–247 contribute to the GTP site; these read GVQGSGKT, DTAGR, and SKMD.

This sequence belongs to the GTP-binding SRP family. SRP54 subfamily. In terms of assembly, part of the signal recognition particle protein translocation system, which is composed of SRP and FtsY. Archaeal SRP consists of a 7S RNA molecule of 300 nucleotides and two protein subunits: SRP54 and SRP19.

It is found in the cytoplasm. The enzyme catalyses GTP + H2O = GDP + phosphate + H(+). Its function is as follows. Involved in targeting and insertion of nascent membrane proteins into the cytoplasmic membrane. Binds to the hydrophobic signal sequence of the ribosome-nascent chain (RNC) as it emerges from the ribosomes. The SRP-RNC complex is then targeted to the cytoplasmic membrane where it interacts with the SRP receptor FtsY. In Sulfolobus acidocaldarius (strain ATCC 33909 / DSM 639 / JCM 8929 / NBRC 15157 / NCIMB 11770), this protein is Signal recognition particle 54 kDa protein.